Reading from the N-terminus, the 374-residue chain is 4-galactosyl-N-acetylglucosaminide 3-alpha-L-fucosyltransferase FUT5 (374 aa).

Residues 1–15 (MDPLGPAKPQWLWRR) are Cytoplasmic-facing. The chain crosses the membrane as a helical; Signal-anchor for type II membrane protein span at residues 16 to 34 (CLAGLLFQLLVAVCFFSYL). Residues 35–374 (RVSRDDATGS…TVRSIAAWFT (340 aa)) lie on the Lumenal side of the membrane. 4 N-linked (GlcNAc...) asparagine glycosylation sites follow: asparagine 60, asparagine 105, asparagine 167, and asparagine 198.

It belongs to the glycosyltransferase 10 family. Liver, colon and testis and trace amounts in T-cells and brain.

The protein resides in the golgi apparatus. Its subcellular location is the golgi stack membrane. It carries out the reaction a beta-D-galactosyl-(1-&gt;3)-N-acetyl-beta-D-glucosaminyl derivative + GDP-beta-L-fucose = a beta-D-galactosyl-(1-&gt;3)-[alpha-L-fucosyl-(1-&gt;4)]-N-acetyl-beta-D-glucosaminyl derivative + GDP + H(+). It catalyses the reaction an N-acetyl-alpha-neuraminyl-(2-&gt;3)-beta-D-galactosyl-(1-&gt;4)-N-acetyl-beta-D-glucosaminyl derivative + GDP-beta-L-fucose = an alpha-Neu5Ac-(2-&gt;3)-beta-D-Gal-(1-&gt;4)-[alpha-L-Fuc-(1-&gt;3)]-beta-D-GlcNAc derivative + GDP + H(+). The enzyme catalyses an alpha-Neu5Ac-(2-&gt;3)-beta-D-Gal-(1-&gt;4)-beta-D-GlcNAc-(1-&gt;3)-beta-D-Gal-(1-&gt;4)-[alpha-L-Fuc-(1-&gt;3)]-beta-D-GlcNAc derivative + GDP-beta-L-fucose = an alpha-Neu5Ac-(2-&gt;3)-beta-D-Gal-(1-&gt;4)-[alpha-L-Fuc-(1-&gt;3)]-beta-D-GlcNAc-(1-&gt;3)-beta-D-Gal-(1-&gt;4)-[alpha-L-Fuc-(1-&gt;3)]-beta-D-GlcNAc derivative + GDP + H(+). The catalysed reaction is a beta-D-galactosyl-(1-&gt;4)-N-acetyl-beta-D-glucosaminyl derivative + GDP-beta-L-fucose = a beta-D-galactosyl-(1-&gt;4)-[alpha-L-fucosyl-(1-&gt;3)]-N-acetyl-beta-D-glucosaminyl derivative + GDP + H(+). It carries out the reaction a neolactoside nLc4Cer + GDP-beta-L-fucose = a neolactoside III(3)-alpha-Fuc-nLc4Cer + GDP + H(+). It catalyses the reaction a neolactoside nLc6Cer + GDP-beta-L-fucose = beta-D-galactosyl-(1-&gt;4)-N-acetyl-beta-D-glucosaminyl-(1-&gt;3)-beta-D-galactosyl-(1-&gt;4)-[alpha-L-fucosyl-(1-&gt;3)]-N-acetyl-beta-D-glucosaminyl-(1-&gt;3)-beta-D-galactosyl-(1-&gt;4)-beta-D-glucosyl-(1&lt;-&gt;1')-ceramide + GDP + H(+). The enzyme catalyses a neolactoside nLc6Cer(d18:1(4E)) + GDP-beta-L-fucose = a neolactoside III(3)-alpha-Fuc-nLc6Cer(d18:1(4E)) + GDP + H(+). The catalysed reaction is a neolactoside nLc4Cer(d18:1(4E)) + GDP-beta-L-fucose = a neolactoside III(3)-alpha-Fuc-nLc4Cer(d18:1(4E)) + GDP + H(+). It carries out the reaction a neolactoside VI(3)-alpha-NeuNAc-nLc6Cer + GDP-beta-L-fucose = a neolactoside VI(3)-alpha-NeuAc,III(3)-alphaFuc-nLc6Cer + GDP + H(+). It catalyses the reaction beta-D-galactosyl-(1-&gt;4)-N-acetyl-D-glucosamine + GDP-beta-L-fucose = beta-D-galactosyl-(1-&gt;4)-[alpha-L-fucosyl-(1-&gt;3)]-N-acetyl-D-glucosamine + GDP + H(+). The enzyme catalyses N-acetyl-alpha-neuraminosyl-(2-&gt;3)-beta-D-galactosyl-(1-&gt;4)-N-acetyl-beta-D-glucosamine + GDP-beta-L-fucose = N-acetyl-alpha-neuraminosyl-(2-&gt;3)-beta-D-galactosyl-(1-&gt;4)-[alpha-L-fucosyl-(1-&gt;3)]-N-acetyl-beta-D-glucosamine + GDP + H(+). The catalysed reaction is alpha-L-Fuc-(1-&gt;2)-beta-D-Gal-(1-&gt;4)-D-GlcNAc + GDP-beta-L-fucose = alpha-L-Fuc-(1-&gt;2)-beta-D-Gal-(1-&gt;4)-[alpha-L-Fuc-(1-&gt;3)]-D-GlcNAc + GDP + H(+). It carries out the reaction an alpha-Neu5Ac-(2-&gt;3)-beta-D-Gal-(1-&gt;3)-D-GlcNAc derivative + GDP-beta-L-fucose = an alpha-Neu5Ac-(2-&gt;3)-beta-D-Gal-(1-&gt;3)-[alpha-L-Fuc-(1-&gt;4)]-beta-D-GlcNAc derivative + GDP + H(+). It functions in the pathway protein modification; protein glycosylation. Functionally, catalyzes preferentially the transfer of L-fucose, from a guanosine diphosphate-beta-L-fucose, to the N-acetyl-beta-D-glucosamine (GlcNAc) of an N-acetyllactosamine unit (type 2 chain) of an oligosaccharide, or a glycoprotein- and a glycolipid-linked N-acetyllactosamine unit via an alpha (1,3) linkage and participates in the surface expression of VIM-2, Lewis X/SSEA-1 and sialyl Lewis X antigens. Preferentially transfers fucose to the GlcNAc of an internal N-acetyllactosamine unit of a poly-N-acetyllactosamine chain acceptor substrate. Also catalyzes to a lesser extend the transfer of L-fucose to the GlcNAc of a type 1 (beta-D-galactosyl-(1-&gt;3)-N-acetyl-beta-D-glucosaminyl) or H-type 1 (alpha-L-Fuc-(1-&gt;2)-beta-D-Gal-(1-&gt;3)-D-GlcNAc) chain oligosaccharide via an alpha (1,4) linkage. Preferentially catalyzes sialylated type 2 oligosaccharide acceptors over neutral type 2 or H type 2 (alpha-L-Fuc-(1-&gt;2)-beta-D-Gal-(1-&gt;4)-D-GlcNAc) oligosaccharide acceptors. Lactose-based structures are also acceptor substrates. In Homo sapiens (Human), this protein is 4-galactosyl-N-acetylglucosaminide 3-alpha-L-fucosyltransferase FUT5.